The following is a 414-amino-acid chain: Isocitrate dehydrogenase [NADP] cytoplasmic (414 aa).

Ser2 carries the post-translational modification N-acetylserine. Tyr42 carries the phosphotyrosine modification. 75–77 (TIT) contributes to the NADP(+) binding site. A substrate-binding site is contributed by Thr77. The residue at position 81 (Lys81) is an N6-acetyllysine. An NADP(+)-binding site is contributed by Arg82. Substrate is bound by residues 94–100 (SPNGTIR) and Arg109. Lys126 is modified (N6-succinyllysine). Residues Arg132 and Lys212 each coordinate substrate. N6-acetyllysine occurs at positions 224, 233, and 243. Mn(2+) is bound at residue Asp252. Lys260 serves as a coordination point for NADP(+). Mn(2+) is bound by residues Asp275 and Asp279. An NADP(+)-binding site is contributed by 310 to 315 (GTVTRH). Lys321 carries the N6-acetyllysine modification. NADP(+) is bound at residue Asn328. Ser389 bears the Phosphoserine mark. Lys400 bears the N6-succinyllysine mark.

It belongs to the isocitrate and isopropylmalate dehydrogenases family. Homodimer. It depends on Mg(2+) as a cofactor. Mn(2+) serves as cofactor. Acetylation at Lys-374 dramatically reduces catalytic activity.

It localises to the cytoplasm. Its subcellular location is the cytosol. The protein resides in the peroxisome. It carries out the reaction D-threo-isocitrate + NADP(+) = 2-oxoglutarate + CO2 + NADPH. In terms of biological role, catalyzes the NADP(+)-dependent oxidative decarboxylation of isocitrate (D-threo-isocitrate) to 2-ketoglutarate (2-oxoglutarate), which is required by other enzymes such as the phytanoyl-CoA dioxygenase. Plays a critical role in the generation of NADPH, an important cofactor in many biosynthesis pathways. May act as a corneal epithelial crystallin and may be involved in maintaining corneal epithelial transparency. This chain is Isocitrate dehydrogenase [NADP] cytoplasmic (IDH1), found in Homo sapiens (Human).